The chain runs to 512 residues: 2-isopropylmalate synthase (512 aa).

The Pyruvate carboxyltransferase domain maps to 5-268 (LIIFDTTLRD…DLGIATQHIL (264 aa)). Aspartate 14, histidine 202, histidine 204, and asparagine 239 together coordinate Mn(2+). Residues 394-512 (GFVSLFQQSE…NKADRVAAQG (119 aa)) form a regulatory domain region.

Belongs to the alpha-IPM synthase/homocitrate synthase family. LeuA type 1 subfamily. As to quaternary structure, homodimer. Mn(2+) is required as a cofactor.

Its subcellular location is the cytoplasm. The catalysed reaction is 3-methyl-2-oxobutanoate + acetyl-CoA + H2O = (2S)-2-isopropylmalate + CoA + H(+). Its pathway is amino-acid biosynthesis; L-leucine biosynthesis; L-leucine from 3-methyl-2-oxobutanoate: step 1/4. Catalyzes the condensation of the acetyl group of acetyl-CoA with 3-methyl-2-oxobutanoate (2-ketoisovalerate) to form 3-carboxy-3-hydroxy-4-methylpentanoate (2-isopropylmalate). The polypeptide is 2-isopropylmalate synthase (Verminephrobacter eiseniae (strain EF01-2)).